The primary structure comprises 233 residues: Phosphoglycolate phosphatase (233 aa).

The active-site Nucleophile is the aspartate 9. Aspartate 9 and aspartate 11 together coordinate Mg(2+). Lysine 154 contacts substrate. Mg(2+) is bound by residues aspartate 177 and aspartate 181.

It belongs to the archaeal SPP-like hydrolase family. It depends on Mg(2+) as a cofactor.

The catalysed reaction is 2-phosphoglycolate + H2O = glycolate + phosphate. Functionally, catalyzes the dephosphorylation of 2-phosphoglycolate. The chain is Phosphoglycolate phosphatase from Pyrococcus abyssi (strain GE5 / Orsay).